A 38-amino-acid chain; its full sequence is Mating hormone A-factor 2 (38 aa).

A compositionally biased stretch (polar residues) spans 1–12 (MQPITTASTQAT). Residues 1 to 20 (MQPITTASTQATQKDKSSEK) form a disordered region. A propeptide spanning residues 1–23 (MQPITTASTQATQKDKSSEKKDN) is cleaved from the precursor. Cys-35 bears the Cysteine methyl ester mark. A lipid anchor (S-farnesyl cysteine) is attached at Cys-35. The propeptide at 36-38 (VIA) is removed in mature form.

It localises to the cell membrane. Functionally, the active factor is excreted into the culture medium by haploid cells of the A mating type and acts on cells of the opposite mating type (type alpha). It mediates the conjugation process between the two types by inhibiting the initiation of DNA synthesis in type alpha cells and synchronizing them with type A. This is Mating hormone A-factor 2 (MFA2) from Saccharomyces cerevisiae (strain ATCC 204508 / S288c) (Baker's yeast).